We begin with the raw amino-acid sequence, 250 residues long: Trypsin (250 aa).

Positions 1 to 15 (MRLLALLLMVGAAVA) are cleaved as a signal peptide. A propeptide spans 16-22 (VPREDGR) (activation peptide). A Peptidase S1 domain is found at 23–247 (IIGGHECAAH…FLGWIERTLE (225 aa)). 6 disulfides stabilise this stretch: cysteine 29/cysteine 163, cysteine 47/cysteine 63, cysteine 133/cysteine 236, cysteine 140/cysteine 209, cysteine 174/cysteine 188, and cysteine 199/cysteine 223. Residues histidine 62 and aspartate 106 each act as charge relay system in the active site. Serine 203 functions as the Charge relay system in the catalytic mechanism.

It belongs to the peptidase S1 family.

It is found in the secreted. The protein resides in the extracellular space. It carries out the reaction Preferential cleavage: Arg-|-Xaa, Lys-|-Xaa.. The chain is Trypsin from Pleuronectes platessa (European plaice).